Reading from the N-terminus, the 473-residue chain is Protein translocase subunit SecD (473 aa).

6 helical membrane-spanning segments follow: residues valine 5–proline 25, alanine 316–glycine 336, isoleucine 337–phenylalanine 357, proline 364–leucine 384, tryptophan 409–phenylalanine 429, and glycine 436–threonine 456.

Belongs to the SecD/SecF family. SecD subfamily. Forms a complex with SecF. Part of the essential Sec protein translocation apparatus which comprises SecA, SecYEG and auxiliary proteins SecDF. Other proteins may also be involved.

Its subcellular location is the cell inner membrane. In terms of biological role, part of the Sec protein translocase complex. Interacts with the SecYEG preprotein conducting channel. SecDF uses the proton motive force (PMF) to complete protein translocation after the ATP-dependent function of SecA. This Elusimicrobium minutum (strain Pei191) protein is Protein translocase subunit SecD.